Here is a 208-residue protein sequence, read N- to C-terminus: Uridine kinase (208 aa).

Position 11–18 (11–18) interacts with ATP; sequence GGTGSGKS.

The protein belongs to the uridine kinase family.

It localises to the cytoplasm. It carries out the reaction uridine + ATP = UMP + ADP + H(+). The enzyme catalyses cytidine + ATP = CMP + ADP + H(+). Its pathway is pyrimidine metabolism; CTP biosynthesis via salvage pathway; CTP from cytidine: step 1/3. It functions in the pathway pyrimidine metabolism; UMP biosynthesis via salvage pathway; UMP from uridine: step 1/1. The polypeptide is Uridine kinase (Clostridium novyi (strain NT)).